The chain runs to 525 residues: GMP synthase [glutamine-hydrolyzing] (525 aa).

The 199-residue stretch at arginine 9–leucine 207 folds into the Glutamine amidotransferase type-1 domain. Cysteine 86 serves as the catalytic Nucleophile. Residues histidine 181 and glutamate 183 contribute to the active site. Residues tryptophan 208–arginine 400 enclose the GMPS ATP-PPase domain. Serine 235–serine 241 contributes to the ATP binding site.

Homodimer.

The enzyme catalyses XMP + L-glutamine + ATP + H2O = GMP + L-glutamate + AMP + diphosphate + 2 H(+). Its pathway is purine metabolism; GMP biosynthesis; GMP from XMP (L-Gln route): step 1/1. Functionally, catalyzes the synthesis of GMP from XMP. The sequence is that of GMP synthase [glutamine-hydrolyzing] from Sodalis glossinidius (strain morsitans).